We begin with the raw amino-acid sequence, 662 residues long: MSSNLQLVETFDSRQFVVARWNRNDTTAMVPSAIAVVVFVESVEYKLGCKEKIGYSPTPEDQDQFMILQMESIDEANRICHDSIAKGFAINNTKIVFTPLLGLNGFRLQDAIDFMKTSQPHFNNDELLEVLTMAICQELPERLKILEDGFSFIEQGVSELIQNSACEMFGSFASPVRRNGYSDIDINVESVSAPGQRVSTNVRPLNEVVANPKCLITHPLTKSELETYPQEEIIKILYRCFNENSAFKTKFEMRFLPARTPIIVFKNIEVEGMNVSYDLSVHNQISVEKASLLHEFIVKDKSKGSRMKNAMMFIVHWAKSNKLLSGDYPEEKLEVKTKLNSYIINQLVIHFVQAATNKVHVNPQAKRDSRVNEYNFDTLFGDYCKFFRELFKYYANFDFTNKAIYGKKAMQKKTLSSAHGGVEESPLMLMDPMDITHNISAKVTEDAVKLLNGLIRNALFILKQNHFHINYLLETNTMATMLMKSREPKISISTRVTDGAEHQYLSVQLPAVVITSSDLFLLLTRVLRFNVCPNEQGPSVVDLCTPTGAIFLVTSRAWVGRRNTKRALKNSRHDLTPLQIDVMCSDKYDYEEDIAELRISMSTVPGTRIRLACIDIMRGQVSEVRDAIHFLIDQFINNNYDDLEKNGVQTISRIPIAAPTWP.

Mg(2+) is bound by residues D183 and D185. Residues 384-437 form the PAP-associated domain; that stretch reads CKFFRELFKYYANFDFTNKAIYGKKAMQKKTLSSAHGGVEESPLMLMDPMDITH.

It belongs to the DNA polymerase type-B-like family. In terms of assembly, forms a complex composed of sart-3, terminal uridylyltransferase usip-1 and U6 snRNA; complex formation is mediated by usip-1 and sart-3 binding to U6 snRNA. Mg(2+) is required as a cofactor. The cofactor is Mn(2+). As to expression, ubiquitously expressed.

The protein resides in the nucleus. The protein localises to the nucleoplasm. It carries out the reaction RNA(n) + UTP = RNA(n)-3'-uridine ribonucleotide + diphosphate. Functionally, acts as a specific terminal uridylyltransferase for U6 snRNA. Responsible for the addition of UTP at the 3' end of U6 snRNA which stabilizes U6 snRNA. Does not have activity towards modified uridine containing 3'-monophosphorylation or 2'-O-methylation. The polypeptide is U6 snRNA-specific terminal uridylyltransferase (Caenorhabditis elegans).